A 110-amino-acid polypeptide reads, in one-letter code: MRQVTIPLIQSKSMFCVIYRSSKRDQTYLYVEKKDDFSRVPDALMKGFGQPQLAMMLPLDGRKKLVNAELEKVKQALSEQGYYLQLPPPPEDLLKQHLSSVGQNTSHADR.

In terms of domain architecture, YcgL spans 14–98 (MFCVIYRSSK…PPEDLLKQHL (85 aa)). The interval 88-110 (PPPEDLLKQHLSSVGQNTSHADR) is disordered. The span at 97 to 110 (HLSSVGQNTSHADR) shows a compositional bias: polar residues.

The polypeptide is Protein YcgL (Salmonella typhi).